Reading from the N-terminus, the 43-residue chain is MLGIDARLFLVVAPILAAVSWAAFNIGRAAVGQLQLLIKRSRA.

Residues 8 to 26 form a helical membrane-spanning segment; the sequence is LFLVVAPILAAVSWAAFNI.

This sequence belongs to the PsbY family. As to quaternary structure, PSII is composed of 1 copy each of membrane proteins PsbA, PsbB, PsbC, PsbD, PsbE, PsbF, PsbH, PsbI, PsbJ, PsbK, PsbL, PsbM, PsbT, PsbX, PsbY, PsbZ, Psb30/Ycf12, peripheral proteins PsbO, CyanoQ (PsbQ), PsbU, PsbV and a large number of cofactors. It forms dimeric complexes.

The protein localises to the cellular thylakoid membrane. Loosely associated component of the core of photosystem II (PSII), it is not always seen in crystals. PSII is a light-driven water plastoquinone oxidoreductase, using light energy to abstract electrons from H(2)O, generating a proton gradient subsequently used for ATP formation. The protein is Photosystem II reaction center protein Y of Parasynechococcus marenigrum (strain WH8102).